The following is an 85-amino-acid chain: Large ribosomal subunit protein bL27 (85 aa).

The tract at residues 1–24 is disordered; it reads MAHKKAGGSSRNGRDSHSKRLGVK.

Belongs to the bacterial ribosomal protein bL27 family.

The chain is Large ribosomal subunit protein bL27 from Nitrosomonas eutropha (strain DSM 101675 / C91 / Nm57).